A 485-amino-acid chain; its full sequence is Cobyric acid synthase (485 aa).

The 199-residue stretch at 250-448 (TQTVAVIAYP…LHGMFEDPRV (199 aa)) folds into the GATase cobBQ-type domain. Residue C334 is the Nucleophile of the active site. H440 is a catalytic residue.

The protein belongs to the CobB/CobQ family. CobQ subfamily.

Its pathway is cofactor biosynthesis; adenosylcobalamin biosynthesis. Functionally, catalyzes amidations at positions B, D, E, and G on adenosylcobyrinic A,C-diamide. NH(2) groups are provided by glutamine, and one molecule of ATP is hydrogenolyzed for each amidation. The polypeptide is Cobyric acid synthase (Polaromonas naphthalenivorans (strain CJ2)).